The following is a 309-amino-acid chain: Low-density lipoprotein receptor-related protein 1 (309 aa).

The protein belongs to the LDLR family.

The protein localises to the endoplasmic reticulum. Its subcellular location is the golgi apparatus. It localises to the endosome. Its function is as follows. Involved in endocytosis, fatty acid beta-oxidation and infectious growth. Plays a critical role in the accumulation of MSN2 from the cytosol to the nucleus by activating the cyclic AMP signaling pathway. MSN2 can then target the dienoyl-coenzyme A isomerase DCI1 and other genes involved in fatty acid beta-oxidation, which is important for lipid droplets degradation and infectious growth. The sequence is that of Low-density lipoprotein receptor-related protein 1 from Pyricularia oryzae (strain 70-15 / ATCC MYA-4617 / FGSC 8958) (Rice blast fungus).